We begin with the raw amino-acid sequence, 300 residues long: Protoheme IX farnesyltransferase (300 aa).

A run of 8 helical transmembrane segments spans residues 24-44, 46-66, 94-114, 118-138, 146-166, 172-192, 224-244, and 278-298; these read VTQL…PGMV, WHVL…AFAI, PQIL…LYTF, LTMW…TLLL, IVIG…AVTG, AWIL…VLAL, VILF…VVYL, and IVYL…RPLL.

Belongs to the UbiA prenyltransferase family. Protoheme IX farnesyltransferase subfamily.

It is found in the cell inner membrane. It carries out the reaction heme b + (2E,6E)-farnesyl diphosphate + H2O = Fe(II)-heme o + diphosphate. It participates in porphyrin-containing compound metabolism; heme O biosynthesis; heme O from protoheme: step 1/1. Functionally, converts heme B (protoheme IX) to heme O by substitution of the vinyl group on carbon 2 of heme B porphyrin ring with a hydroxyethyl farnesyl side group. The polypeptide is Protoheme IX farnesyltransferase (Burkholderia ambifaria (strain ATCC BAA-244 / DSM 16087 / CCUG 44356 / LMG 19182 / AMMD) (Burkholderia cepacia (strain AMMD))).